Reading from the N-terminus, the 266-residue chain is Manganese catalase (266 aa).

Glutamate 35 contributes to the Mn(2+) binding site. Ca(2+)-binding residues include aspartate 57 and aspartate 61. Residues glutamate 66, histidine 69, glutamate 148, and histidine 181 each coordinate Mn(2+). Asparagine 218, serine 220, and glycine 222 together coordinate Ca(2+). The segment at 243-266 (ENPEAMGGIPHIKPGDPRLHNHQG) is disordered. Positions 255–266 (KPGDPRLHNHQG) are enriched in basic and acidic residues.

This sequence belongs to the manganese catalase family. In terms of assembly, homohexamer. Requires Ca(2+) as cofactor. Mn(2+) is required as a cofactor.

The catalysed reaction is 2 H2O2 = O2 + 2 H2O. In terms of biological role, catalyzes the decomposition of hydrogen peroxide into water and oxygen. This chain is Manganese catalase, found in Lactiplantibacillus plantarum (Lactobacillus plantarum).